Reading from the N-terminus, the 318-residue chain is Aspartate carbamoyltransferase catalytic subunit (318 aa).

The carbamoyl phosphate site is built by Arg-59 and Thr-60. L-aspartate is bound at residue Lys-87. Positions 109, 137, and 140 each coordinate carbamoyl phosphate. Residues Arg-170 and Arg-224 each coordinate L-aspartate. 2 residues coordinate carbamoyl phosphate: Gly-265 and Pro-266.

The protein belongs to the aspartate/ornithine carbamoyltransferase superfamily. ATCase family. As to quaternary structure, heterododecamer (2C3:3R2) of six catalytic PyrB chains organized as two trimers (C3), and six regulatory PyrI chains organized as three dimers (R2).

It carries out the reaction carbamoyl phosphate + L-aspartate = N-carbamoyl-L-aspartate + phosphate + H(+). It participates in pyrimidine metabolism; UMP biosynthesis via de novo pathway; (S)-dihydroorotate from bicarbonate: step 2/3. Its function is as follows. Catalyzes the condensation of carbamoyl phosphate and aspartate to form carbamoyl aspartate and inorganic phosphate, the committed step in the de novo pyrimidine nucleotide biosynthesis pathway. The protein is Aspartate carbamoyltransferase catalytic subunit of Rhizobium rhizogenes (strain K84 / ATCC BAA-868) (Agrobacterium radiobacter).